Reading from the N-terminus, the 552-residue chain is Lysine--tRNA ligase (552 aa).

A 'HIGH' region motif is present at residues 71 to 79 (PSGLPHLGT). A 'KMSKS' region motif is present at residues 319-323 (KISKS). Lys-322 contacts ATP.

This sequence belongs to the class-I aminoacyl-tRNA synthetase family.

It localises to the cytoplasm. It catalyses the reaction tRNA(Lys) + L-lysine + ATP = L-lysyl-tRNA(Lys) + AMP + diphosphate. The sequence is that of Lysine--tRNA ligase from Caulobacter sp. (strain K31).